A 198-amino-acid polypeptide reads, in one-letter code: Na(+)-translocating NADH-quinone reductase subunit E (198 aa).

The next 6 membrane-spanning stretches (helical) occupy residues 11–31 (SIFI…FLAV), 39–59 (FGLG…NNLV), 77–97 (FLNF…LEMV), 110–130 (GIFL…SFMV), 140–160 (IVYG…LAGI), and 176–196 (LGIT…FSGV).

This sequence belongs to the NqrDE/RnfAE family. As to quaternary structure, composed of six subunits; NqrA, NqrB, NqrC, NqrD, NqrE and NqrF. Post-translationally, the N-terminus is blocked.

It is found in the cell inner membrane. It catalyses the reaction a ubiquinone + n Na(+)(in) + NADH + H(+) = a ubiquinol + n Na(+)(out) + NAD(+). Its activity is regulated as follows. This reaction is tightly coupled to the Na(+) pumping activity and specifically requires Na(+) for activity. Inhibited by korormicin and 2-N-heptyl-4-hydroxyquinoline N-oxide (HQNO). Functionally, NQR complex catalyzes the reduction of ubiquinone-1 to ubiquinol by two successive reactions, coupled with the transport of Na(+) ions from the cytoplasm to the periplasm. NqrA to NqrE are probably involved in the second step, the conversion of ubisemiquinone to ubiquinol. This chain is Na(+)-translocating NADH-quinone reductase subunit E, found in Vibrio alginolyticus.